A 288-amino-acid chain; its full sequence is Ras-like protein 1 (288 aa).

11–18 provides a ligand contact to GTP; it reads GGGGVGKS. The short motif at 33-41 is the Effector region element; sequence YDPTIEDSY. Residues 58–62 and 117–120 contribute to the GTP site; these read DTAGQ and NKCD. Residues 176 to 288 are disordered; the sequence is EKQQQQQQQQ…KSKNGCCVIV (113 aa). Low complexity-rich tracts occupy residues 178-216 and 246-281; these read QQQQ…NNNN and PNQS…SKSK. A lipid anchor (S-palmitoyl cysteine) is attached at Cys284. Cys285 carries the post-translational modification Cysteine methyl ester. Cys285 is lipidated: S-farnesyl cysteine. Positions 286–288 are cleaved as a propeptide — removed in mature form; that stretch reads VIV.

Belongs to the small GTPase superfamily. Ras family.

It localises to the cell membrane. The enzyme catalyses GTP + H2O = GDP + phosphate + H(+). Alternates between an inactive form bound to GDP and an active form bound to GTP. Activated by a guanine nucleotide-exchange factor (GEF) and inactivated by a GTPase-activating protein (GAP). Its function is as follows. Required for the regulation of both a MAP kinase signaling pathway and a cAMP signaling pathway. The activation of these pathways contributes to the pathogenicity of the cells through the induction of the morphological transition from the yeast to the polarized filamentous form. The protein is Ras-like protein 1 (RAS1) of Candida albicans (strain WO-1) (Yeast).